The sequence spans 317 residues: Gamma-glutamyl hydrolase (317 aa).

A signal peptide spans 1 to 24 (MASLGRLLCAWVLLLCGLASPGLS). A Gamma-glutamyl hydrolase domain is found at 25–317 (GSYERGSKRP…SSFQQAYMFN (293 aa)). 2 N-linked (GlcNAc...) asparagine glycosylation sites follow: N46 and N100. C133 serves as the catalytic Nucleophile. N153, N162, N188, and N202 each carry an N-linked (GlcNAc...) asparagine glycan. H243 (proton donor) is an active-site residue. N306 carries an N-linked (GlcNAc...) asparagine glycan.

It belongs to the peptidase C26 family. As to quaternary structure, homodimer.

The protein resides in the secreted. It localises to the extracellular space. Its subcellular location is the lysosome. The protein localises to the melanosome. It carries out the reaction (6S)-5,6,7,8-tetrahydrofolyl-(gamma-L-Glu)(n) + (n-1) H2O = (6S)-5,6,7,8-tetrahydrofolate + (n-1) L-glutamate. With respect to regulation, activity is altered by insulin and estrogen. In terms of biological role, hydrolyzes the polyglutamate sidechains of pteroylpolyglutamates. Progressively removes gamma-glutamyl residues from pteroylpoly-gamma-glutamate to yield pteroyl-alpha-glutamate (folic acid) and free glutamate. May play an important role in the bioavailability of dietary pteroylpolyglutamates and in the metabolism of pteroylpolyglutamates and antifolates. Exhibits either endo- or exopeptidase activity depending upon the tissue of origin. When secreted, it acts primarily as an endopeptidase. This Rattus norvegicus (Rat) protein is Gamma-glutamyl hydrolase (Ggh).